Consider the following 209-residue polypeptide: NADH-quinone oxidoreductase subunit C (209 aa).

The protein belongs to the complex I 30 kDa subunit family. As to quaternary structure, NDH-1 is composed of 14 different subunits. Subunits NuoB, C, D, E, F, and G constitute the peripheral sector of the complex.

The protein resides in the cell inner membrane. It carries out the reaction a quinone + NADH + 5 H(+)(in) = a quinol + NAD(+) + 4 H(+)(out). In terms of biological role, NDH-1 shuttles electrons from NADH, via FMN and iron-sulfur (Fe-S) centers, to quinones in the respiratory chain. The immediate electron acceptor for the enzyme in this species is believed to be ubiquinone. Couples the redox reaction to proton translocation (for every two electrons transferred, four hydrogen ions are translocated across the cytoplasmic membrane), and thus conserves the redox energy in a proton gradient. The chain is NADH-quinone oxidoreductase subunit C from Phenylobacterium zucineum (strain HLK1).